The chain runs to 804 residues: Probable replication endonuclease from prophage-like region (804 aa).

Active-site O-(5'-phospho-DNA)-tyrosine intermediate residues include Tyr498 and Tyr502.

Belongs to the phage GPA family.

Its function is as follows. Possible endonuclease which induces a single-strand cut and initiates DNA replication. The sequence is that of Probable replication endonuclease from prophage-like region from Shigella boydii serotype 4 (strain Sb227).